Consider the following 610-residue polypeptide: F-box/LRR-repeat protein 4 (610 aa).

Positions 5–52 (DRINNCLPEELILEIFRRLESKPNRDACSLVCKRWLSLERFSRTTLRI) constitute an F-box domain. LRR repeat units follow at residues 53 to 79 (GASFSPDDFISLLSRRFLYITSIHVDE), 124 to 149 (SSSLTDTGLTALANGFPRIENLSLIW), 150 to 175 (CPNVSSVGLCSLAQKCTSLKSLDLQG), 178 to 200 (VGDQGLAAVGKFCKQLEELNLRF), 201 to 227 (CEGLTDVGVIDLVVGCSKSLKSIGVAA), 228 to 253 (SAKITDLSLEAVGSHCKLLEVLYLDS), 256 to 277 (IHDKGLIAVAQGCHRLKNLKLQ), 278 to 303 (CVSVTDVAFAAVGELCTSLERLALYS), 304 to 329 (FQHFTDKGMRAIGKGSKKLKDLTLSD), 330 to 355 (CYFVSCKGLEAIAHGCKELERVEING), 356 to 381 (CHNIGTRGIEAIGKSCPRLKELALLY), 382 to 407 (CQRIGNSALQEIGKGCKSLEILHLVD), 408 to 433 (CSGIGDIAMCSIAKGCRNLKKLHIRR), 434 to 459 (CYEIGNKGIISIGKHCKSLTELSLRF), 460 to 484 (CDKVGNKALIAIGKGCSLQQLNVSG), 485 to 510 (CNQISDAGITAIARGCPQLTHLDISV), 511 to 536 (LQNIGDMPLAELGEGCPMLKDLVLSH), 537 to 562 (CHHITDNGLNHLVQKCKLLETCHMVY), and 563 to 588 (CPGITSAGVATVVSSCPHIKKVLIEK). The tract at residues 88-125 (LSPSPKRKRGRDSSSPSSSKRKKLTDKTHSGAENVESS) is disordered.

The sequence is that of F-box/LRR-repeat protein 4 (FBL4) from Arabidopsis thaliana (Mouse-ear cress).